Here is a 163-residue protein sequence, read N- to C-terminus: ATP synthase subunit b', chloroplastic (163 aa).

A helical transmembrane segment spans residues 26–46; that stretch reads ATLPLMAVQILLFMVILNAVF.

It belongs to the ATPase B chain family. As to quaternary structure, F-type ATPases have 2 components, F(1) - the catalytic core - and F(0) - the membrane proton channel. F(1) has five subunits: alpha(3), beta(3), gamma(1), delta(1), epsilon(1). F(0) has four main subunits: a(1), b(1), b'(1) and c(10-14). The alpha and beta chains form an alternating ring which encloses part of the gamma chain. F(1) is attached to F(0) by a central stalk formed by the gamma and epsilon chains, while a peripheral stalk is formed by the delta, b and b' chains.

The protein localises to the plastid. It localises to the chloroplast thylakoid membrane. Functionally, f(1)F(0) ATP synthase produces ATP from ADP in the presence of a proton or sodium gradient. F-type ATPases consist of two structural domains, F(1) containing the extramembraneous catalytic core and F(0) containing the membrane proton channel, linked together by a central stalk and a peripheral stalk. During catalysis, ATP synthesis in the catalytic domain of F(1) is coupled via a rotary mechanism of the central stalk subunits to proton translocation. In terms of biological role, component of the F(0) channel, it forms part of the peripheral stalk, linking F(1) to F(0). The b'-subunit is a diverged and duplicated form of b found in plants and photosynthetic bacteria. The chain is ATP synthase subunit b', chloroplastic from Guillardia theta (Cryptophyte).